An 834-amino-acid chain; its full sequence is Serine/threonine-protein kinase TNNI3K (834 aa).

G2 carries the N-myristoyl glycine lipid modification. Residues S21 to F49 are a coiled coil. 10 ANK repeats span residues R66–R96, N100–Q129, G133–V162, V166–V195, V199–A229, E233–P262, Y268–L297, F303–H334, D338–L367, and D380–E409. Positions I462–L722 constitute a Protein kinase domain. ATP-binding positions include I468 to V476 and K489. Residue D587 is the Proton acceptor of the active site. A disordered region spans residues P815–N834.

It belongs to the protein kinase superfamily. TKL Ser/Thr protein kinase family. MAP kinase kinase kinase subfamily. As to quaternary structure, interacts with TNNI3, ACTC, ACTA1, MYBPC3, AIP, FABP3 and HADHB. Mg(2+) serves as cofactor. Post-translationally, autophosphorylated.

It localises to the nucleus. The protein localises to the cytoplasm. It carries out the reaction L-seryl-[protein] + ATP = O-phospho-L-seryl-[protein] + ADP + H(+). The catalysed reaction is L-threonyl-[protein] + ATP = O-phospho-L-threonyl-[protein] + ADP + H(+). Functionally, may play a role in cardiac physiology. The chain is Serine/threonine-protein kinase TNNI3K from Mus musculus (Mouse).